A 469-amino-acid chain; its full sequence is A-type ATP synthase subunit B (469 aa).

Belongs to the ATPase alpha/beta chains family. As to quaternary structure, has multiple subunits with at least A(3), B(3), C, D, E, F, H, I and proteolipid K(x).

Its subcellular location is the cell membrane. In terms of biological role, component of the A-type ATP synthase that produces ATP from ADP in the presence of a proton gradient across the membrane. The B chain is a regulatory subunit. This chain is A-type ATP synthase subunit B, found in Staphylothermus marinus (strain ATCC 43588 / DSM 3639 / JCM 9404 / F1).